We begin with the raw amino-acid sequence, 46 residues long: Pape peptide (46 aa).

The span at 1 to 10 (KQLLKEALAP) shows a compositional bias: low complexity. Residues 1–46 (KQLLKEALAPEPAPKPAPEPAPEPAPEPAPEAAPEPAAAAPEAAPE) are disordered. Residues 11–33 (EPAPKPAPEPAPEPAPEPAPEAA) are compositionally biased toward pro residues. 4 PAPE repeats span residues 16–19 (PAPE), 20–23 (PAPE), 24–27 (PAPE), and 28–31 (PAPE). Positions 34-46 (PEPAAAAPEAAPE) are enriched in low complexity.

As to expression, expressed by the venom gland.

It is found in the secreted. The polypeptide is Pape peptide (Tityus stigmurus (Brazilian scorpion)).